Reading from the N-terminus, the 510-residue chain is Histidine ammonia-lyase (510 aa).

Residues 145-147 (ASG) constitute a cross-link (5-imidazolinone (Ala-Gly)). S146 is subject to 2,3-didehydroalanine (Ser).

This sequence belongs to the PAL/histidase family. In terms of processing, contains an active site 4-methylidene-imidazol-5-one (MIO), which is formed autocatalytically by cyclization and dehydration of residues Ala-Ser-Gly.

Its subcellular location is the cytoplasm. The catalysed reaction is L-histidine = trans-urocanate + NH4(+). It functions in the pathway amino-acid degradation; L-histidine degradation into L-glutamate; N-formimidoyl-L-glutamate from L-histidine: step 1/3. In Stigmatella aurantiaca, this protein is Histidine ammonia-lyase.